The chain runs to 205 residues: Large ribosomal subunit protein uL4 (205 aa).

A disordered region spans residues 43–95 (RSGNRAQKDRAEVKHSTKKPWRQKGTGRARAGMTSSPLWRGGGRAFPNSPEEN). Over residues 48–57 (AQKDRAEVKH) the composition is skewed to basic and acidic residues. The segment covering 58–69 (STKKPWRQKGTG) has biased composition (basic residues).

It belongs to the universal ribosomal protein uL4 family. Part of the 50S ribosomal subunit.

Its function is as follows. One of the primary rRNA binding proteins, this protein initially binds near the 5'-end of the 23S rRNA. It is important during the early stages of 50S assembly. It makes multiple contacts with different domains of the 23S rRNA in the assembled 50S subunit and ribosome. Forms part of the polypeptide exit tunnel. The sequence is that of Large ribosomal subunit protein uL4 from Bordetella bronchiseptica (strain ATCC BAA-588 / NCTC 13252 / RB50) (Alcaligenes bronchisepticus).